Here is a 590-residue protein sequence, read N- to C-terminus: Guanylate-binding protein 5 (590 aa).

The segment at 1–306 is NLRP3-binding; it reads MAPEIHMPEP…LTYVDAINSG (306 aa). Residues 1–310 form a GTPase domain (Globular) region; that stretch reads MAPEIHMPEP…DAINSGALPS (310 aa). The 243-residue stretch at 35–277 folds into the GB1/RHD3-type G domain; it reads TQPVVVVAIV…FCSHIFTQSK (243 aa). Residues 45-52, 67-69, 182-183, and Leu-246 each bind GTP; these read GLYRTGKS, VGS, and RD. The required for tetramerization, but not for dimerization stretch occupies residues 529 to 590; the sequence is QIALEKARVA…RRHHHDCVIS (62 aa). Cys-587 is modified (cysteine methyl ester). The S-geranylgeranyl cysteine moiety is linked to residue Cys-587. Positions 588 to 590 are cleaved as a propeptide — removed in mature form; it reads VIS.

This sequence belongs to the TRAFAC class dynamin-like GTPase superfamily. GB1/RHD3 GTPase family. GB1 subfamily. In terms of assembly, homodimer; homodimerizes upon GTP-binding, forming a close face-to-face dimer. Heterodimer with other family members, including GBP1, GBP2, GBP3 and GBP4. May also form tetramers (dimer of dimers) in the presence of GTP. Interacts with NLRP3, possibly in its tetrameric form, and promotes PYCARD/ASC polymerization. Isoprenylation is required for proper subcellular location. Low expression, if any, in many tissues in the absence of stimulation.

Its subcellular location is the cytoplasmic vesicle membrane. It is found in the golgi apparatus membrane. It localises to the cytoplasm. It catalyses the reaction GTP + H2O = GDP + phosphate + H(+). Interferon (IFN)-inducible GTPase that plays important roles in innate immunity against a diverse range of bacterial, viral and protozoan pathogens. Hydrolyzes GTP, but in contrast to other family members, does not produce GMP. Following infection, recruited to the pathogen-containing vacuoles or vacuole-escaped bacteria and acts as a positive regulator of inflammasome assembly by promoting the release of inflammasome ligands from bacteria. Acts by promoting lysis of pathogen-containing vacuoles, releasing pathogens into the cytosol. Following pathogen release in the cytosol, promotes recruitment of proteins that mediate bacterial cytolysis, such as Gm12250/Irgb10: this liberates ligands that are detected by inflammasomes, such as lipopolysaccharide (LPS) that activates the non-canonical CASP4/CASP11 inflammasome or double-stranded DNA (dsDNA) that activates the AIM2 inflammasome. As an activator of NLRP3 inflammasome assembly: promotes selective NLRP3 inflammasome assembly in response to microbial and soluble, but not crystalline, agents. Independently of its GTPase activity, acts as an inhibitor of various viruses infectivity by inhibiting FURIN-mediated maturation of viral envelope proteins. This Mus musculus (Mouse) protein is Guanylate-binding protein 5.